Here is a 654-residue protein sequence, read N- to C-terminus: Coiled-coil domain-containing protein 30 (654 aa).

Positions Thr38–Ala65 are disordered. Residues Phe53–Ser62 are compositionally biased toward basic and acidic residues. Coiled-coil stretches lie at residues Arg97 to Ala244 and Lys276 to Arg559. Residues Ala614–Leu654 are disordered. A compositionally biased stretch (polar residues) spans Ser625–Leu654.

The protein belongs to the prefoldin subunit beta family.

This is Coiled-coil domain-containing protein 30 (Ccdc30) from Mus musculus (Mouse).